The primary structure comprises 118 residues: V-type proton ATPase subunit G 2 (118 aa).

A coiled-coil region spans residues 8–57 (IQQLLQAEKRAAEKVADARKRKARRLKQAKEEAQMEVDQYRREREQEFQS). The segment at 25–90 (ARKRKARRLK…VQGMQSSQQR (66 aa)) is disordered. Residues 35 to 55 (QAKEEAQMEVDQYRREREQEF) show a composition bias toward basic and acidic residues. Composition is skewed to polar residues over residues 56-69 (QSKQ…QGNL) and 78-89 (RRQVQGMQSSQQ).

The protein belongs to the V-ATPase G subunit family. In terms of assembly, V-ATPase is a heteromultimeric enzyme made up of two complexes: the ATP-hydrolytic V1 complex and the proton translocation V0 complex. The V1 complex consists of three catalytic AB heterodimers that form a heterohexamer, three peripheral stalks each consisting of EG heterodimers, one central rotor including subunits D and F, and the regulatory subunits C and H. The proton translocation complex V0 consists of the proton transport subunit a, a ring of proteolipid subunits c9c'', rotary subunit d, subunits e and f, and the accessory subunits ATP6AP1/Ac45 and ATP6AP2/PRR. As to expression, expressed in brain (at protein level).

The protein resides in the melanosome. The protein localises to the cytoplasmic vesicle. It localises to the clathrin-coated vesicle membrane. Subunit of the V1 complex of vacuolar(H+)-ATPase (V-ATPase), a multisubunit enzyme composed of a peripheral complex (V1) that hydrolyzes ATP and a membrane integral complex (V0) that translocates protons. V-ATPase is responsible for acidifying and maintaining the pH of intracellular compartments and in some cell types, is targeted to the plasma membrane, where it is responsible for acidifying the extracellular environment. This chain is V-type proton ATPase subunit G 2, found in Bos taurus (Bovine).